A 330-amino-acid polypeptide reads, in one-letter code: Ketol-acid reductoisomerase (NADP(+)) (330 aa).

The region spanning Met1–Thr181 is the KARI N-terminal Rossmann domain. NADP(+) contacts are provided by residues Tyr24–Gln27, Arg47, Ser50, Ser52, and Asp82–Gln85. The active site involves His107. Gly133 serves as a coordination point for NADP(+). Residues Asn182–Leu327 form the KARI C-terminal knotted domain. The Mg(2+) site is built by Asp190, Glu194, Glu226, and Glu230. Residue Ser251 participates in substrate binding.

Belongs to the ketol-acid reductoisomerase family. Mg(2+) serves as cofactor.

It catalyses the reaction (2R)-2,3-dihydroxy-3-methylbutanoate + NADP(+) = (2S)-2-acetolactate + NADPH + H(+). It carries out the reaction (2R,3R)-2,3-dihydroxy-3-methylpentanoate + NADP(+) = (S)-2-ethyl-2-hydroxy-3-oxobutanoate + NADPH + H(+). It functions in the pathway amino-acid biosynthesis; L-isoleucine biosynthesis; L-isoleucine from 2-oxobutanoate: step 2/4. Its pathway is amino-acid biosynthesis; L-valine biosynthesis; L-valine from pyruvate: step 2/4. In terms of biological role, involved in the biosynthesis of branched-chain amino acids (BCAA). Catalyzes an alkyl-migration followed by a ketol-acid reduction of (S)-2-acetolactate (S2AL) to yield (R)-2,3-dihydroxy-isovalerate. In the isomerase reaction, S2AL is rearranged via a Mg-dependent methyl migration to produce 3-hydroxy-3-methyl-2-ketobutyrate (HMKB). In the reductase reaction, this 2-ketoacid undergoes a metal-dependent reduction by NADPH to yield (R)-2,3-dihydroxy-isovalerate. The chain is Ketol-acid reductoisomerase (NADP(+)) from Chlorobium chlorochromatii (strain CaD3).